Consider the following 301-residue polypeptide: MPIIIDKDLPARKVLQEENIFVMTKERAETQDIRALKIAILNLMPTKQETEAQLLRLIGNTPLQLDVHLLHMESHLSRNVAQEHLTSFYKTFRDIENEKFDGLIITGAPVETLSFEEVDYWEELKRIMEYSKTNVTSTLHICWGAQAGLYYHYGVPKYPLKEKMFGVFEHEVREQHVKLLQGFDELFFAPHSRHTEVRENDIRGVKELTLLANSEEAGVHLVIGPEGRQVFALGHSEYSCDTLKQEYERDRQKGLNIDVPKNYFKHNNPNEKPLVRWRSHGNLLFSNWLNYYVYQETPYVL.

Cys-142 (acyl-thioester intermediate) is an active-site residue. Residues Lys-163 and Ser-192 each coordinate substrate. His-235 acts as the Proton acceptor in catalysis. Glu-237 is an active-site residue. Arg-249 serves as a coordination point for substrate.

It belongs to the MetA family.

The protein localises to the cytoplasm. It carries out the reaction L-homoserine + acetyl-CoA = O-acetyl-L-homoserine + CoA. The protein operates within amino-acid biosynthesis; L-methionine biosynthesis via de novo pathway; O-acetyl-L-homoserine from L-homoserine: step 1/1. In terms of biological role, transfers an acetyl group from acetyl-CoA to L-homoserine, forming acetyl-L-homoserine. The polypeptide is Homoserine O-acetyltransferase (Bacillus anthracis (strain A0248)).